Consider the following 360-residue polypeptide: Photosystem II protein D1 (360 aa).

A run of 3 helical transmembrane segments spans residues Tyr29–Ser46, His118–Leu133, and Trp142–Ala156. His118 lines the chlorophyll a pocket. Tyr126 contributes to the pheophytin a binding site. Residues Asp170 and Glu189 each contribute to the [CaMn4O5] cluster site. The helical transmembrane segment at Phe197 to Leu218 threads the bilayer. Chlorophyll a is bound at residue His198. Residues His215 and Ser264–Phe265 contribute to the a quinone site. A Fe cation-binding site is contributed by His215. Fe cation is bound at residue His272. A helical transmembrane segment spans residues Phe274–Leu288. Positions 332, 333, 342, and 344 each coordinate [CaMn4O5] cluster. Residues Ser345–Gly360 constitute a propeptide that is removed on maturation.

It belongs to the reaction center PufL/M/PsbA/D family. As to quaternary structure, PSII is composed of 1 copy each of membrane proteins PsbA, PsbB, PsbC, PsbD, PsbE, PsbF, PsbH, PsbI, PsbJ, PsbK, PsbL, PsbM, PsbT, PsbX, PsbY, PsbZ, Psb30/Ycf12, at least 3 peripheral proteins of the oxygen-evolving complex and a large number of cofactors. It forms dimeric complexes. Requires The D1/D2 heterodimer binds P680, chlorophylls that are the primary electron donor of PSII, and subsequent electron acceptors. It shares a non-heme iron and each subunit binds pheophytin, quinone, additional chlorophylls, carotenoids and lipids. D1 provides most of the ligands for the Mn4-Ca-O5 cluster of the oxygen-evolving complex (OEC). There is also a Cl(-1) ion associated with D1 and D2, which is required for oxygen evolution. The PSII complex binds additional chlorophylls, carotenoids and specific lipids. as cofactor. Post-translationally, tyr-161 forms a radical intermediate that is referred to as redox-active TyrZ, YZ or Y-Z. C-terminally processed by CTPA; processing is essential to allow assembly of the oxygen-evolving complex and thus photosynthetic growth.

It localises to the plastid. The protein localises to the chloroplast thylakoid membrane. It catalyses the reaction 2 a plastoquinone + 4 hnu + 2 H2O = 2 a plastoquinol + O2. Photosystem II (PSII) is a light-driven water:plastoquinone oxidoreductase that uses light energy to abstract electrons from H(2)O, generating O(2) and a proton gradient subsequently used for ATP formation. It consists of a core antenna complex that captures photons, and an electron transfer chain that converts photonic excitation into a charge separation. The D1/D2 (PsbA/PsbD) reaction center heterodimer binds P680, the primary electron donor of PSII as well as several subsequent electron acceptors. This chain is Photosystem II protein D1, found in Heterosigma akashiwo (Chromophytic alga).